The chain runs to 246 residues: YjeF N-terminal domain-containing 3 (246 aa).

Positions 24–234 (VATVETELLR…DIQKKYELNL (211 aa)) constitute a YjeF N-terminal domain.

In terms of assembly, interacts with apoa1a. Binds to high-density lipoprotein.

Accelerates cholesterol efflux from endothelial cells to high-density lipoprotein (HDL) and thereby regulates angiogenesis. Orchestrates hematopoietic stem and progenitor cell emergence from the hemogenic endothelium, a type of specialized endothelium manifesting hematopoietic potential. YJEFN3-mediated cholesterol efflux activates endothelial SREBF2, the master transcription factor for cholesterol biosynthesis, which in turn transactivates NOTCH and promotes hematopoietic stem and progenitor cell emergence. The polypeptide is YjeF N-terminal domain-containing 3 (Danio rerio (Zebrafish)).